The chain runs to 363 residues: Chorismate synthase (363 aa).

NADP(+) is bound by residues Arg48 and Arg54. Residues 125–127, 237–238, Gly277, 292–296, and Arg318 each bind FMN; these read RSS, NA, and KPTSS.

This sequence belongs to the chorismate synthase family. As to quaternary structure, homotetramer. Requires FMNH2 as cofactor.

It catalyses the reaction 5-O-(1-carboxyvinyl)-3-phosphoshikimate = chorismate + phosphate. The protein operates within metabolic intermediate biosynthesis; chorismate biosynthesis; chorismate from D-erythrose 4-phosphate and phosphoenolpyruvate: step 7/7. Catalyzes the anti-1,4-elimination of the C-3 phosphate and the C-6 proR hydrogen from 5-enolpyruvylshikimate-3-phosphate (EPSP) to yield chorismate, which is the branch point compound that serves as the starting substrate for the three terminal pathways of aromatic amino acid biosynthesis. This reaction introduces a second double bond into the aromatic ring system. This chain is Chorismate synthase, found in Pseudomonas fluorescens (strain Pf0-1).